A 296-amino-acid polypeptide reads, in one-letter code: Protoheme IX farnesyltransferase (296 aa).

Topologically, residues 1 to 9 (MMFKQYLQV) are cytoplasmic. A helical transmembrane segment spans residues 10-28 (TKPGIIFGNLISVIGGFLL). The Periplasmic segment spans residues 29–37 (ASKGSIDYP). A helical transmembrane segment spans residues 38-56 (LFIYTLVGVSLVVASGCVF). The Cytoplasmic portion of the chain corresponds to 57–78 (NNFIDRDIDRKMERTKNRVLVK). The chain crosses the membrane as a helical span at residues 79 to 97 (GLISPGVSLVYATLLGIAG). At 98 to 107 (FMLLWFGANP) the chain is on the periplasmic side. Residues 108–126 (LACWLGVMGFVVYVGIYSL) traverse the membrane as a helical segment. Residues 127 to 197 (YMKRHSVYGT…YQAANIPVLP (71 aa)) lie on the Cytoplasmic side of the membrane. The helical transmembrane segment at 198-216 (VVKGISVAKNHITLYIIAF) threads the bilayer. Topologically, residues 217 to 228 (AVATLMLTLGGY) are periplasmic. The helical transmembrane segment at 229 to 247 (AGYKYLVVAAAVSVWWLGM) threads the bilayer. The Cytoplasmic segment spans residues 248-268 (ALRGYKVEDDKVWARKLFGFS). Residues 269–287 (IIAITALSIMMSVDFMVPN) form a helical membrane-spanning segment. Over 288–296 (SQSLLTYVW) the chain is Periplasmic.

This sequence belongs to the UbiA prenyltransferase family. Protoheme IX farnesyltransferase subfamily.

The protein localises to the cell inner membrane. It catalyses the reaction heme b + (2E,6E)-farnesyl diphosphate + H2O = Fe(II)-heme o + diphosphate. It participates in porphyrin-containing compound metabolism; heme O biosynthesis; heme O from protoheme: step 1/1. In terms of biological role, converts heme B (protoheme IX) to heme O by substitution of the vinyl group on carbon 2 of heme B porphyrin ring with a hydroxyethyl farnesyl side group. The sequence is that of Protoheme IX farnesyltransferase from Salmonella arizonae (strain ATCC BAA-731 / CDC346-86 / RSK2980).